We begin with the raw amino-acid sequence, 304 residues long: Acetylglutamate kinase (304 aa).

Substrate contacts are provided by residues 69–70, Arg-91, and Asn-202; that span reads GG.

This sequence belongs to the acetylglutamate kinase family. ArgB subfamily.

The protein resides in the cytoplasm. The enzyme catalyses N-acetyl-L-glutamate + ATP = N-acetyl-L-glutamyl 5-phosphate + ADP. It participates in amino-acid biosynthesis; L-arginine biosynthesis; N(2)-acetyl-L-ornithine from L-glutamate: step 2/4. In terms of biological role, catalyzes the ATP-dependent phosphorylation of N-acetyl-L-glutamate. The protein is Acetylglutamate kinase of Caulobacter sp. (strain K31).